Here is a 137-residue protein sequence, read N- to C-terminus: Holo-[acyl-carrier-protein] synthase (137 aa).

The Mg(2+) site is built by Asp-8 and Glu-58.

It belongs to the P-Pant transferase superfamily. AcpS family. Mg(2+) is required as a cofactor.

Its subcellular location is the cytoplasm. It catalyses the reaction apo-[ACP] + CoA = holo-[ACP] + adenosine 3',5'-bisphosphate + H(+). Transfers the 4'-phosphopantetheine moiety from coenzyme A to a Ser of acyl-carrier-protein. The polypeptide is Holo-[acyl-carrier-protein] synthase (Lactobacillus delbrueckii subsp. bulgaricus (strain ATCC 11842 / DSM 20081 / BCRC 10696 / JCM 1002 / NBRC 13953 / NCIMB 11778 / NCTC 12712 / WDCM 00102 / Lb 14)).